Consider the following 101-residue polypeptide: Ubiquitin-related modifier 1 (101 aa).

A 1-thioglycine modification is found at Gly-101. Gly-101 is covalently cross-linked (Glycyl lysine isopeptide (Gly-Lys) (interchain with K-? in acceptor proteins)).

Belongs to the URM1 family. In terms of processing, C-terminal thiocarboxylation occurs in 2 steps, it is first acyl-adenylated (-COAMP) via the hesA/moeB/thiF part of UBA4, then thiocarboxylated (-COSH) via the rhodanese domain of UBA4.

The protein resides in the cytoplasm. It functions in the pathway tRNA modification; 5-methoxycarbonylmethyl-2-thiouridine-tRNA biosynthesis. In terms of biological role, acts as a sulfur carrier required for 2-thiolation of mcm(5)S(2)U at tRNA wobble positions of cytosolic tRNA(Lys), tRNA(Glu) and tRNA(Gln). Serves as sulfur donor in tRNA 2-thiolation reaction by being thiocarboxylated (-COSH) at its C-terminus by the MOCS3 homolog UBA4. The sulfur is then transferred to tRNA to form 2-thiolation of mcm(5)S(2)U. Prior mcm(5) tRNA modification by the elongator complex is required for 2-thiolation. Also acts as a ubiquitin-like protein (UBL) that is covalently conjugated via an isopeptide bond to lysine residues of target proteins such as AHP1. The thiocarboxylated form serves as substrate for conjugation and oxidative stress specifically induces the formation of UBL-protein conjugates. This Kluyveromyces lactis (strain ATCC 8585 / CBS 2359 / DSM 70799 / NBRC 1267 / NRRL Y-1140 / WM37) (Yeast) protein is Ubiquitin-related modifier 1.